Here is a 396-residue protein sequence, read N- to C-terminus: MAEKEHYERTKPHVNIGTIGHVDHGKTTLTAAITKVLSEKGLAKAQDYASIDAAPEEKERGITINTAHVEYETEKRHYAHIDAPGHADYVKNMITGAAQMDGAILVVAATDGPMPQTREHILLARQVGVDYIVVFLNKTDLVDDPELIDLVEMEVRELLSEYDYPGDDIPVIRGSALKALEGDPEQEKVIMELMDTIDEYIPTPVRETDKPFLMPVEDVFTITGRGTVASGRIDRGTVKIGDEVEIIGLKPDVIKSTVTGLEMFRKTLDLGEAGDNVGVLLRGVNREQVERGQVLAKPGSIQLHNKFKGEVYILTKEEGGRHTPFFSNYRPQFYFHTTDVTGVIELPDGVEMVMPGDNVTFEVDLIAPVAIEKGTKFTVREGGRTVGAGVVSEILD.

A tr-type G domain is found at 11–205 (KPHVNIGTIG…TIDEYIPTPV (195 aa)). The segment at 20-27 (GHVDHGKT) is G1. 20–27 (GHVDHGKT) contributes to the GTP binding site. Residue Thr-27 participates in Mg(2+) binding. The interval 61-65 (GITIN) is G2. The tract at residues 82–85 (DAPG) is G3. GTP-binding positions include 82–86 (DAPGH) and 137–140 (NKTD). The interval 137-140 (NKTD) is G4. The tract at residues 175–177 (SAL) is G5.

This sequence belongs to the TRAFAC class translation factor GTPase superfamily. Classic translation factor GTPase family. EF-Tu/EF-1A subfamily. Monomer.

The protein localises to the cytoplasm. The catalysed reaction is GTP + H2O = GDP + phosphate + H(+). Functionally, GTP hydrolase that promotes the GTP-dependent binding of aminoacyl-tRNA to the A-site of ribosomes during protein biosynthesis. This is Elongation factor Tu from Lacticaseibacillus casei (strain BL23) (Lactobacillus casei).